The sequence spans 380 residues: Alanine racemase (380 aa).

The Proton acceptor; specific for D-alanine role is filled by Lys-34. The residue at position 34 (Lys-34) is an N6-(pyridoxal phosphate)lysine. Arg-135 lines the substrate pocket. Tyr-267 acts as the Proton acceptor; specific for L-alanine in catalysis. Residue Met-315 participates in substrate binding.

Belongs to the alanine racemase family. The cofactor is pyridoxal 5'-phosphate.

The enzyme catalyses L-alanine = D-alanine. It participates in amino-acid biosynthesis; D-alanine biosynthesis; D-alanine from L-alanine: step 1/1. In terms of biological role, catalyzes the interconversion of L-alanine and D-alanine. May also act on other amino acids. This is Alanine racemase (alr) from Lawsonia intracellularis (strain PHE/MN1-00).